The following is a 499-amino-acid chain: Potassium voltage-gated channel subfamily A member 2 (499 aa).

The disordered stretch occupies residues 1–27 (MTVATGDLTDGSVGFAGHPQDSYDPEP). The segment at 1–125 (MTVATGDLTD…YELGEEAMEI (125 aa)) is tetramerization domain. Over 1–160 (MTVATGDLTD…LLFEYPESSG (160 aa)) the chain is Cytoplasmic. A helical membrane pass occupies residues 161–182 (PARIIAIISVTVILISIVSFCL). Over 183 to 221 (ETLPVFRDENEDMHGSGGNYYSYPNSTVRFQKSNTFTDP) the chain is Extracellular. The N-linked (GlcNAc...) asparagine glycan is linked to Asn207. Residues 222–243 (FFIVETLCIIWFSFEFLVRFLA) form a helical membrane-spanning segment. The S-palmitoyl cysteine moiety is linked to residue Cys244. The Cytoplasmic segment spans residues 244–254 (CPSKAVFFTNL). A helical membrane pass occupies residues 255-275 (MNIIDIVAIIPYFITLGTELA). Over 276-289 (EKTEDGQQGQQAMS) the chain is Extracellular. A helical; Voltage-sensor transmembrane segment spans residues 290–310 (LAILRVIRLVRVFRIFKLSRH). Residues 311-325 (SKGLQILGQTLNASM) lie on the Cytoplasmic side of the membrane. The S4-S5 linker stretch occupies residues 312–325 (KGLQILGQTLNASM). The helical transmembrane segment at 326–347 (RELGLLIFFLFIGVILFSSAVF) threads the bilayer. At 348-361 (FAEADERDSQFPSI) the chain is on the extracellular side. Positions 362–373 (PDAFWWAVVSMT) form an intramembrane region, helical. A Selectivity filter motif is present at residues 374–379 (TVGYGD). The stretch at 374–381 (TVGYGDMV) is an intramembrane region. At 382-388 (PTTIGGK) the chain is on the extracellular side. Residues 389–417 (IVGSLCAIAGVLTIALPVPVIVSNFNYFY) form a helical membrane-spanning segment. Residues 418–499 (HRETEGEEQA…VNITKMLTDV (82 aa)) lie on the Cytoplasmic side of the membrane. The short motif at 497–499 (TDV) is the PDZ-binding element.

This sequence belongs to the potassium channel family. A (Shaker) (TC 1.A.1.2) subfamily. Kv1.2/KCNA2 sub-subfamily. Homotetramer and heterotetramer with other family members. As to expression, detected in tadpole brain and spinal cord.

Its subcellular location is the cell membrane. The enzyme catalyses K(+)(in) = K(+)(out). Its function is as follows. Voltage-gated potassium channel that mediates transmembrane potassium transport in excitable membranes, primarily in the brain and central nervous system. Prevents aberrant action potential firing and regulates neuronal output. Forms tetrameric potassium-selective channels through which potassium ions pass in accordance with their electrochemical gradient. The channel alternates between opened and closed conformations in response to the voltage difference across the membrane. Can form functional homotetrameric channels and heterotetrameric channels with other family members; the channels characteristics depend critically on the types of channel-forming alpha subunits that are present. Channel properties are modulated by cytoplasmic beta subunits that regulate the subcellular location of the alpha subunits. In vivo, membranes probably contain a mixture of heteromeric potassium channel complexes, making it difficult to assign currents observed in intact tissues to any particular potassium channel family member. Homotetrameric KCNA2 forms a delayed-rectifier potassium channel that opens in response to membrane depolarization, followed by slow spontaneous channel closure. Regulates neuronal excitability and plays a role as pacemaker in the regulation of neuronal action potentials. KCNA2-containing channels play a presynaptic role and prevent hyperexcitability and aberrant action potential firing. Response to toxins that are selective for KCNA2-containing potassium channels suggests that in Purkinje cells, dendritic subthreshold KCNA2-containing potassium channels prevent random spontaneous calcium spikes, suppressing dendritic hyperexcitability without hindering the generation of somatic action potentials, and thereby play an important role in motor coordination. Plays a role in the induction of long-term potentiation of neuron excitability in the CA3 layer of the hippocampus. This Xenopus laevis (African clawed frog) protein is Potassium voltage-gated channel subfamily A member 2 (kcna2).